A 146-amino-acid polypeptide reads, in one-letter code: Oxygen-independent coproporphyrinogen III oxidase (146 aa).

Tyr-54 serves as a coordination point for S-adenosyl-L-methionine. Residues Cys-60 and Cys-64 each contribute to the [4Fe-4S] cluster site. Phe-66 provides a ligand contact to S-adenosyl-L-methionine. A [4Fe-4S] cluster-binding site is contributed by Cys-67. S-adenosyl-L-methionine-binding positions include 111 to 112 and Glu-143; that span reads GT.

It belongs to the anaerobic coproporphyrinogen-III oxidase family. In terms of assembly, monomer. Requires [4Fe-4S] cluster as cofactor.

The protein resides in the cytoplasm. It carries out the reaction coproporphyrinogen III + 2 S-adenosyl-L-methionine = protoporphyrinogen IX + 2 5'-deoxyadenosine + 2 L-methionine + 2 CO2. The protein operates within porphyrin-containing compound metabolism; protoporphyrin-IX biosynthesis; protoporphyrinogen-IX from coproporphyrinogen-III (AdoMet route): step 1/1. In terms of biological role, involved in the heme biosynthesis. Catalyzes the anaerobic oxidative decarboxylation of propionate groups of rings A and B of coproporphyrinogen III to yield the vinyl groups in protoporphyrinogen IX. The sequence is that of Oxygen-independent coproporphyrinogen III oxidase (hemN) from Mannheimia haemolytica (Pasteurella haemolytica).